Consider the following 637-residue polypeptide: Threonine--tRNA ligase (637 aa).

The TGS domain maps to 1–61; it reads MITITLPDSS…ATDAAVRLIT (61 aa). The interval 238-528 is catalytic; it reads DHRKLGAELD…LIEHFAGKFP (291 aa). Zn(2+)-binding residues include Cys-329, His-380, and His-505.

This sequence belongs to the class-II aminoacyl-tRNA synthetase family. In terms of assembly, homodimer. Zn(2+) serves as cofactor.

The protein localises to the cytoplasm. It catalyses the reaction tRNA(Thr) + L-threonine + ATP = L-threonyl-tRNA(Thr) + AMP + diphosphate + H(+). Its function is as follows. Catalyzes the attachment of threonine to tRNA(Thr) in a two-step reaction: L-threonine is first activated by ATP to form Thr-AMP and then transferred to the acceptor end of tRNA(Thr). Also edits incorrectly charged L-seryl-tRNA(Thr). The polypeptide is Threonine--tRNA ligase (Desulfosudis oleivorans (strain DSM 6200 / JCM 39069 / Hxd3) (Desulfococcus oleovorans)).